Here is a 332-residue protein sequence, read N- to C-terminus: Torsin-1A (332 aa).

An N-terminal signal peptide occupies residues 1–20 (MKLGRAALGLLLLAPSVVQA). The interaction with SNAPIN stretch occupies residues 91 to 251 (KPKKPLTLSL…VSVFNNKNSG (161 aa)). 102–109 (GWTGTGKN) lines the ATP pocket. N-linked (GlcNAc...) asparagine glycosylation is found at Asn143 and Asn158. An interaction with KLC1 region spans residues 251 to 332 (GFWHSSLIDR…FTKLDYYYDD (82 aa)). The segment at 312 to 332 (RVFSDKGCKTVFTKLDYYYDD) is interaction with SYNE3.

The protein belongs to the ClpA/ClpB family. Torsin subfamily. In terms of assembly, homohexamer. Interacts with TOR1B; the interaction may be specific of neural tissues. Interacts (ATP-bound) with TOR1AIP1 and TOR1AIP2; the interactions induce ATPase activity. Interacts with KLHL14; preferentially when ATP-free. Interacts with KLC1 (via TPR repeats); the interaction associates TOR1A with the kinesin oligomeric complex. Interacts with COPS4; the interaction associates TOR1A with the CSN complex. Interacts with SNAPIN; the interaction is direct and associates SNAPIN with the CSN complex. Interacts with STON2. Interacts (ATP-bound) with SYNE3 (via KASH domain); the interaction is required for SYNE3 nuclear envelope localization. Interacts with VIM; the interaction associates TOR1A with the cytoskeleton. Interacts with PLEC. Interacts (ATP-bound) with SLC6A3; regulates SLC6A3 transport to the plasma membrane. In terms of processing, N-glycosylated.

The protein localises to the endoplasmic reticulum lumen. It localises to the nucleus membrane. It is found in the cell projection. The protein resides in the growth cone. Its subcellular location is the cytoplasmic vesicle membrane. The protein localises to the cytoplasmic vesicle. It localises to the secretory vesicle. It is found in the synaptic vesicle. The protein resides in the cytoplasm. Its subcellular location is the cytoskeleton. The enzyme catalyses ATP + H2O = ADP + phosphate + H(+). In terms of biological role, protein with chaperone functions important for the control of protein folding, processing, stability and localization as well as for the reduction of misfolded protein aggregates. Involved in the regulation of synaptic vesicle recycling, controls STON2 protein stability in collaboration with the COP9 signalosome complex (CSN). In the nucleus, may link the cytoskeleton with the nuclear envelope, this mechanism seems to be crucial for the control of nuclear polarity, cell movement and, specifically in neurons, nuclear envelope integrity. Participates in the cellular trafficking and may regulate the subcellular location of multipass membrane proteins such as the dopamine transporter SLC6A3, leading to the modulation of dopamine neurotransmission. In the endoplasmic reticulum, plays a role in the quality control of protein folding by increasing clearance of misfolded proteins such as SGCE variants or holding them in an intermediate state for proper refolding. May have a redundant function with TOR1B in non-neural tissues. The chain is Torsin-1A (TOR1A) from Macaca fascicularis (Crab-eating macaque).